The primary structure comprises 782 residues: Vacuolar import and degradation protein 27 (782 aa).

3 positions are modified to phosphoserine: serine 170, serine 195, and serine 196. The segment covering 188-200 has biased composition (acidic residues); it reads DDDDELDSSSDDF. Positions 188–215 are disordered; it reads DDDDELDSSSDDFQDAKDTSFEHEKESE. The span at 201–215 shows a compositional bias: basic and acidic residues; that stretch reads QDAKDTSFEHEKESE. The residue at position 222 (serine 222) is a Phosphoserine. The span at 372 to 384 shows a compositional bias: basic and acidic residues; the sequence is DDRSNEERDKESS. A disordered region spans residues 372 to 422; the sequence is DDRSNEERDKESSESENDSEDEDDENDHSKRIISSEAFEEPRRATSKGNSS. Over residues 385–397 the composition is skewed to acidic residues; the sequence is ESENDSEDEDDEN. Phosphothreonine is present on threonine 486.

The protein belongs to the VID27 family.

Its subcellular location is the cytoplasm. Has a role in the negative regulation of gluconeogenesis. Required for vacuolar catabolite degradation of fructose-1,6-bisphosphatase (FBPase). The protein is Vacuolar import and degradation protein 27 (VID27) of Saccharomyces cerevisiae (strain ATCC 204508 / S288c) (Baker's yeast).